Consider the following 835-residue polypeptide: Microcephalin (835 aa).

The BRCT 1 domain occupies 1–93; sequence MAAPILKDVV…AHIDESLFPA (93 aa). Phosphoserine is present on residues serine 279, serine 287, serine 296, and serine 333. Disordered stretches follow at residues 332-376 and 417-442; these read LSPT…RKRS and SPDNLKERNSENLPPESQLPSSPAQF. Threonine 335 is modified (phosphothreonine). A compositionally biased stretch (basic residues) spans 343-361; that stretch reads LLIHSRPRSSSVKRKRVSH. The residue at position 548 (serine 548) is a Phosphoserine. Residues 555–583 form a disordered region; the sequence is AVDLKSTQNKGTTSKISNSSEGEAQSEHE. The span at 559–577 shows a compositional bias: polar residues; sequence KSTQNKGTTSKISNSSEGE. 2 consecutive BRCT domains span residues 640-730 and 751-833; these read SGRG…PFEL and YRGT…NYLL.

As to quaternary structure, interacts with CDC27 and maybe other components of the APC/C complex. Interacts with histone variant H2AX under DNA damage conditions.

The protein localises to the cytoplasm. It localises to the cytoskeleton. The protein resides in the microtubule organizing center. Its subcellular location is the centrosome. Its function is as follows. Implicated in chromosome condensation and DNA damage induced cellular responses. May play a role in neurogenesis and regulation of the size of the cerebral cortex. In Pan troglodytes (Chimpanzee), this protein is Microcephalin.